The chain runs to 418 residues: Phospho-N-acetylmuramoyl-pentapeptide-transferase (418 aa).

10 helical membrane-spanning segments follow: residues Tyr22–Gly42, Thr72–Ala92, Ser95–Ile115, Ile135–Ile155, Ala208–Gly228, Ala244–Ala264, Leu277–Phe297, Phe302–Ile322, Leu326–Val346, and Lys395–Leu415.

It belongs to the glycosyltransferase 4 family. MraY subfamily. Requires Mg(2+) as cofactor.

Its subcellular location is the cell inner membrane. The catalysed reaction is UDP-N-acetyl-alpha-D-muramoyl-L-alanyl-gamma-D-glutamyl-meso-2,6-diaminopimeloyl-D-alanyl-D-alanine + di-trans,octa-cis-undecaprenyl phosphate = di-trans,octa-cis-undecaprenyl diphospho-N-acetyl-alpha-D-muramoyl-L-alanyl-D-glutamyl-meso-2,6-diaminopimeloyl-D-alanyl-D-alanine + UMP. Its pathway is cell wall biogenesis; peptidoglycan biosynthesis. In terms of biological role, catalyzes the initial step of the lipid cycle reactions in the biosynthesis of the cell wall peptidoglycan: transfers peptidoglycan precursor phospho-MurNAc-pentapeptide from UDP-MurNAc-pentapeptide onto the lipid carrier undecaprenyl phosphate, yielding undecaprenyl-pyrophosphoryl-MurNAc-pentapeptide, known as lipid I. This chain is Phospho-N-acetylmuramoyl-pentapeptide-transferase, found in Azobacteroides pseudotrichonymphae genomovar. CFP2.